The sequence spans 314 residues: Target of rapamycin complex subunit wat1 (314 aa).

7 WD repeats span residues 1–35 (MSVQYPPQHSVLLVSSGYDHTIRFWEALSGICSRT), 38–76 (HADSQVNRLCISPDKKFLAAAGNPHVRLYDINTSSQMPL), 81–120 (GHTNNVTAIAFHCDGKWLATSSEDGTVKVWDMRAPSVQRN), 122–161 (DHKSPVNDLLIHPNQGELLSCDQSGRVRAWDLGENSCTHE), 165–204 (EEDVPMSSITVGSDGSMLIAGNNKGNCYVWRMLNHQGASL), 213–252 (AHQRYITRCVLSPDVKHLATCSADATVNIWSTEDMSFMLE), and 257–296 (GHQRWVWDCAFSADSTYLVTASSDHVARLWELSSGETIRQ). Phosphoserine is present on Ser-141.

The protein belongs to the WD repeat LST8 family. The target of rapamycin complex 1 (TORC1) is composed of at least mip1, pop3/wat1, tco89, toc1 and tor2. The target of rapamycin complex 2 (TORC2) is composed of at least bit61, pop3/wat1, sin1, ste20 and tor1. Interacts with prp2.

It localises to the cytoplasm. The protein localises to the nucleus. Its function is as follows. component of both TORC1 and TORC2, which regulate multiple cellular processes to control cell growth in response to environmental signals. Nutrient limitation and environmental stress signals cause inactivation of TORC1. Active TORC1 positively controls cell growth and ribosome biogenesis by regulating ribosomal protein gene expression. TORC1 negatively controls G1 cell-cycle arrest, sexual development and amino acid uptake. Represses mating, meiosis and sporulation efficiency by interfering with the functions of the transcription factor ste11 and the meiosis-promoting RNA-binding protein mei2. TORC2 is required for cell survival under various stress conditions. TORC2 positively controls G1 cell-cycle arrest, sexual development and amino acid uptake. Positively regulates amino acid uptake through the control of expression of amino acid permeases. May play a role in mRNA maturation as a coupling protein between splicing and synthesis and/or stabilization. This Schizosaccharomyces pombe (strain 972 / ATCC 24843) (Fission yeast) protein is Target of rapamycin complex subunit wat1.